The following is a 303-amino-acid chain: Enoyl-CoA hydratase domain-containing protein 3, mitochondrial (303 aa).

A mitochondrion-targeting transit peptide spans 1-17 (MAAVAVLRAFGASGPMC). Lysine 110 bears the N6-succinyllysine mark.

This sequence belongs to the enoyl-CoA hydratase/isomerase family. In terms of tissue distribution, expressed in adipocytes. Expressed in blood cells, with higher expression in patients with low coronary lesions.

The protein resides in the mitochondrion. In terms of biological role, may play a role in fatty acid biosynthesis and insulin sensitivity. The chain is Enoyl-CoA hydratase domain-containing protein 3, mitochondrial from Homo sapiens (Human).